The chain runs to 1157 residues: MDPHWKRHDSSNIPTQPSPSASPKSNKPSSAQRFGNLPWVAPDVIQSQIEYLQALQMQQSLSESENYLQPNFFPFQSGPFSKSRRENTLLPRLNPLAPIGARQPNPSIPQQFSKPINESGTGTMGPAVGELTSPVMKNRAESIFSPVTESFEAFTQGMQTTPQRAGAGVSTATSHTRRRSSAGTDPFSPVSPSNPNFLTPLKPIDGNQEWQQSPLESPLSMHSLQESLHSVEPESPIFQQAPQIPLSNASQQSYINHSSDGASLPQSSFLNFNSSGKRVSVSAAAQQHKNLFLPYLPQASLPKFIGTGKLLVGTLHINRKNRSDAYVITDVLDEPIFICGSKDRNRTLEGDLVAVELLDVNEIMQTKREKEEKKIRRNLSLSGSSKYSVNSKAKMMSISTPMALGMNRGVLSFERSIEKRKNDYEVTGQSLSFVDDVSLTPDSAPKYAGHVVAVLNRPSGETCSGTLALYRPNSLALKNQSSHRRNSSTSSGETGKGPKIVWFKPSDKRIPLIAISSDQVPPTFFTNNDDFKDKVFLAGIKRWPTTSLHPFGTLYESIGTIGDPKVEYKAILHDFSCHTYDFPESLSHCVKRLPTPIPAEELQKRYNLRDKLTFMIGTRDYALHIDTGSIDGVITLGIHVADVAYYVKQDMPLDDEAANRVSEVQLLQGSVPFLPKKVSEEISLIEGHDCLTISIVVQLDLKSGAVLQCSLGPSVIHPSSFISLESAQANLQTNEALQLVDASAHVLTKLRLKTDKKLDLQSLYCFEFCDGQIPNIQNINMSIFEAFPIACSLQQIEHWVNEKVASHLMSVFPSKVILRKNQRPSDFASLVAVSELTGVNLSASSTPSEIMTEIATTKDKRTKMLLQLTLRRMCNESEYTIGTSNAKDVSHFVFSCPYYTHFCHPTRRYIDICVQRQLREAFDGRPDFSKDYRSLLSITQSCNTLSNFYRNAQEKSLHAYLCQLLHSINLRSGLVKHKAFVLAVDQEYIDIVIYEFGLERRISLDLLPLSNCDFNEQKHELYLSWRTNASFFYASSSLEIDTPCFNDFKKKFLDSNGMCKQICDMMDAQVRDLANAAESQESFYSKARGNDSTSKTAKSSSGNQDISGDGKLHSLRMKEPEVVQTIRPGQEVSVLIFADTSATYSLSLITLQSPLSS.

Residues 1-10 (MDPHWKRHDS) show a composition bias toward basic and acidic residues. Disordered regions lie at residues 1–35 (MDPH…QRFG), 159–233 (QTTP…SVEP), and 478–498 (KNQS…GKGP). Low complexity-rich tracts occupy residues 18-31 (SPSA…PSSA) and 181-197 (SAGT…NPNF). Over residues 208-228 (QEWQQSPLESPLSMHSLQESL) the composition is skewed to polar residues. The CSD2 domain occupies 501–574 (VWFKPSDKRI…KVEYKAILHD (74 aa)). The 314-residue stretch at 608–921 (LRDKLTFMIG…ICVQRQLREA (314 aa)) folds into the RNB domain. Residues 973 to 1030 (GLVKHKAFVLAVDQEYIDIVIYEFGLERRISLDLLPLSNCDFNEQKHELYLSWRTNAS) form the DIS3L2 C-terminal domain. The interval 1084–1113 (YSKARGNDSTSKTAKSSSGNQDISGDGKLH) is disordered. A compositionally biased stretch (polar residues) spans 1090 to 1106 (NDSTSKTAKSSSGNQDI).

Belongs to the RNR ribonuclease family.

Its subcellular location is the cytoplasm. This is an uncharacterized protein from Schizosaccharomyces pombe (strain 972 / ATCC 24843) (Fission yeast).